We begin with the raw amino-acid sequence, 142 residues long: Domesticated amidase effector 2 (142 aa).

The signal sequence occupies residues 1 to 35 (MKLFLISAALVVLGLAAVADAIGCSDPSPFQGRWV). Catalysis depends on residues Cys-43 and His-94.

Belongs to the cell wall amidase Dae2/Tae2-like family. May be post-translationally modified, since the saliva wild-type protein is slightly heavier than the recombinant one. In terms of tissue distribution, detected in salivary glands and in the gut (at protein level).

It localises to the secreted. Functionally, tick gut and saliva antibacterial peptide that directly antagonizes host skin commensals which enter the ticks during feeding. Acts as a cell wall hydrolase that cleaves the bond between gamma-D-glutamate-meso-diaminopimelate of a peptide stem and D-alanine of another peptide stem in peptidoglycans. In vitro, degrades peptidoglycans from both Gram-negative and Gram-positive bacteria. Is not able to traverse the protective outer membrane of Gram-negative bacteria. Is not able to kill Borrelia burgdorferi, one of the Lyme disease-causing bacteria. In Ixodes scapularis (Black-legged tick), this protein is Domesticated amidase effector 2.